The primary structure comprises 193 residues: MGVHECPAWLWLLLSLLSLPLGLPVLGAPPRLICDSRVLERYLLEAKEAENITTGCAEHCSLNENITVPDTKVNFYAWKRMEVGQQAVEVWQGLALLSEAVLRGQALLVNSSQPWEPLQLHVDKAVSGLRSLTTLLRALGAQKEAISPPDAASAAPLRTITADTFRKLFRVYSNFLRGKLKLYTGEACRTGDR.

Residues 1-27 (MGVHECPAWLWLLLSLLSLPLGLPVLG) form the signal peptide. Intrachain disulfides connect cysteine 34–cysteine 188 and cysteine 56–cysteine 60. Asparagine 51 is a glycosylation site (N-linked (GlcNAc...) asparagine). Asparagine 65 and asparagine 110 each carry an N-linked (GlcNAc...) asparagine glycan. Residue serine 153 is glycosylated (O-linked (GalNAc...) serine).

The protein belongs to the EPO/TPO family. Produced by kidney or liver of adult mammals and by liver of fetal or neonatal mammals.

It localises to the secreted. In terms of biological role, hormone involved in the regulation of erythrocyte proliferation and differentiation and the maintenance of a physiological level of circulating erythrocyte mass. Binds to EPOR leading to EPOR dimerization and JAK2 activation thereby activating specific downstream effectors, including STAT1 and STAT3. The polypeptide is Erythropoietin (EPO) (Homo sapiens (Human)).